Consider the following 452-residue polypeptide: Phosphoglucosamine mutase (452 aa).

Residue Ser-104 is the Phosphoserine intermediate of the active site. 4 residues coordinate Mg(2+): Ser-104, Asp-246, Asp-248, and Asp-250. Ser-104 carries the post-translational modification Phosphoserine.

Belongs to the phosphohexose mutase family. Mg(2+) serves as cofactor. Post-translationally, activated by phosphorylation.

It catalyses the reaction alpha-D-glucosamine 1-phosphate = D-glucosamine 6-phosphate. Its function is as follows. Catalyzes the conversion of glucosamine-6-phosphate to glucosamine-1-phosphate. The sequence is that of Phosphoglucosamine mutase from Streptomyces griseus subsp. griseus (strain JCM 4626 / CBS 651.72 / NBRC 13350 / KCC S-0626 / ISP 5235).